We begin with the raw amino-acid sequence, 170 residues long: J domain-containing protein (170 aa).

A J domain is found at 17–82 (DYYALLGCDE…SKRALYDKWR (66 aa)). Residues 101–170 (QQSMHWSKPN…VLSKFRNYEI (70 aa)) are disordered. A compositionally biased stretch (basic and acidic residues) spans 110–120 (NTKDRMLEGDG). A compositionally biased stretch (low complexity) spans 121-134 (SKPSGPSSLGPSNP).

The protein is J domain-containing protein (jdp) of Bombyx mori (Silk moth).